A 126-amino-acid chain; its full sequence is Protein ApaG (126 aa).

The ApaG domain maps to 2 to 126; it reads SDTQHQVNVR…FRLAVPGALH (125 aa).

This Pseudomonas aeruginosa (strain LESB58) protein is Protein ApaG.